The sequence spans 543 residues: UPF0324 membrane protein RB9488 (543 aa).

Residues 1 to 22 (MNSNTPSSDNSSPDNVSPDTSD) show a composition bias toward low complexity. The tract at residues 1-41 (MNSNTPSSDNSSPDNVSPDTSDMASAGDDSALATPPPRPSL) is disordered. A helical membrane pass occupies residues 51–73 (WWAIWCAALLLLIAFAAVWIGQP). The disordered stretch occupies residues 91–120 (VETAPENAGPSAEAENEAIETENTAPAENA). A run of 11 helical transmembrane segments spans residues 160 to 182 (ISSS…AFAN), 189 to 211 (AGAF…WMSG), 221 to 243 (EYAL…PDFL), 270 to 292 (LALG…ITTY), 307 to 329 (NMVI…AAAC), 336 to 358 (LSLS…PAVI), 368 to 390 (GGAW…AVLG), 403 to 422 (IQNI…WVTF), 437 to 459 (IWYR…SILY), 479 to 496 (TLRG…GLET), and 511 to 533 (LVLY…YLMF).

This sequence belongs to the UPF0324 family.

The protein localises to the cell membrane. The protein is UPF0324 membrane protein RB9488 of Rhodopirellula baltica (strain DSM 10527 / NCIMB 13988 / SH1).